A 180-amino-acid polypeptide reads, in one-letter code: NADH-quinone oxidoreductase subunit I (180 aa).

4Fe-4S ferredoxin-type domains follow at residues 48-80 (IVLT…LQKA) and 90-119 (EFFR…LTPD). C60, C63, C66, C70, C99, C102, C105, and C109 together coordinate [4Fe-4S] cluster. Positions 161 to 174 (KPKGDAEHEAKPID) are enriched in basic and acidic residues. Residues 161–180 (KPKGDAEHEAKPIDVKSLLP) are disordered.

Belongs to the complex I 23 kDa subunit family. In terms of assembly, NDH-1 is composed of 14 different subunits. Subunits NuoA, H, J, K, L, M, N constitute the membrane sector of the complex. It depends on [4Fe-4S] cluster as a cofactor.

It is found in the cell inner membrane. It catalyses the reaction a quinone + NADH + 5 H(+)(in) = a quinol + NAD(+) + 4 H(+)(out). In terms of biological role, NDH-1 shuttles electrons from NADH, via FMN and iron-sulfur (Fe-S) centers, to quinones in the respiratory chain. The immediate electron acceptor for the enzyme in this species is believed to be ubiquinone. Couples the redox reaction to proton translocation (for every two electrons transferred, four hydrogen ions are translocated across the cytoplasmic membrane), and thus conserves the redox energy in a proton gradient. This is NADH-quinone oxidoreductase subunit I from Aeromonas salmonicida (strain A449).